The following is a 211-amino-acid chain: MERELRLGIMGGTFDPIHYGHLVTAEAVRSEFKLDKVIFVPAGNPPHKVKRKVTDKKHRYLMTILATITNPFFEVSTIEIDREGYTYTIDTIKEFKKIYGEKTQLYFITGADAVLEILTWKSADELLKMCNFVAATRPGVEGNRIDEELNKIRKLYGNVIYKVTVPSLAISSTDIRERVAGGRPIKYLLPESVERYIQKYDLYKKDEENGV.

The protein belongs to the NadD family.

It carries out the reaction nicotinate beta-D-ribonucleotide + ATP + H(+) = deamido-NAD(+) + diphosphate. The protein operates within cofactor biosynthesis; NAD(+) biosynthesis; deamido-NAD(+) from nicotinate D-ribonucleotide: step 1/1. Functionally, catalyzes the reversible adenylation of nicotinate mononucleotide (NaMN) to nicotinic acid adenine dinucleotide (NaAD). The polypeptide is Probable nicotinate-nucleotide adenylyltransferase (Thermoanaerobacter sp. (strain X514)).